The sequence spans 213 residues: Pyrrolidone-carboxylate peptidase (213 aa).

Residues Glu-81, Cys-144, and His-166 contribute to the active site.

The protein belongs to the peptidase C15 family. In terms of assembly, homotetramer.

Its subcellular location is the cytoplasm. The enzyme catalyses Release of an N-terminal pyroglutamyl group from a polypeptide, the second amino acid generally not being Pro.. Its function is as follows. Removes 5-oxoproline from various penultimate amino acid residues except L-proline. The chain is Pyrrolidone-carboxylate peptidase from Pseudomonas fluorescens (strain SBW25).